We begin with the raw amino-acid sequence, 232 residues long: U2 small nuclear ribonucleoprotein B'' (232 aa).

In terms of domain architecture, RRM 1 spans 10–89 (QTVYLRNLNE…KRMRVQYAKT (80 aa)). The tract at residues 92–159 (DCLATEDGST…QEPPAPPNNI (68 aa)) is disordered. The segment covering 108 to 123 (KKQEEKAAEKKRRAEE) has biased composition (basic and acidic residues). Polar residues predominate over residues 127 to 151 (SGPNAAAQSNGTGYQASRLGKTSQE). One can recognise an RRM 2 domain in the interval 158-232 (NILFIQNLPA…NPMAISYAKK (75 aa)).

The protein belongs to the RRM U1 A/B'' family. As to quaternary structure, component of the spliceosome where it is associated with snRNP U2.

The protein localises to the nucleus. Its subcellular location is the cajal body. The protein resides in the nucleoplasm. It localises to the cytoplasm. Involved in nuclear pre-mRNA splicing. In Oryza sativa subsp. indica (Rice), this protein is U2 small nuclear ribonucleoprotein B''.